The chain runs to 771 residues: Transducin-like enhancer protein 3-B (771 aa).

The segment at 1–141 (MYPQGRHPAP…PLTQQQLQAQ (141 aa)) is q domain. The span at 137 to 148 (QLQAQHLSHAAH) shows a compositional bias: low complexity. Disordered regions lie at residues 137–174 (QLQA…GSGS) and 196–360 (HHDL…MEAL). The segment at 142–209 (HLSHAAHGPP…EHRERESSTN (68 aa)) is GP domain. The span at 196–206 (HHDLEHRERES) shows a compositional bias: basic and acidic residues. Over residues 207–217 (STNNSVSPSDS) the composition is skewed to low complexity. Positions 210 to 278 (NSVSPSDSLR…TPRVSPSHSP (69 aa)) are ccN domain. Basic and acidic residues-rich tracts occupy residues 219–257 (RASE…KSDD) and 282–293 (GLDKARALKKDA). Positions 235 to 238 (KKRR) match the Nuclear localization signal motif. Residues 279–451 (PENGLDKARA…GGKPAYSFHV (173 aa)) are SP domain. Residues 294–309 (PNSPASVASSGSTPSS) show a composition bias toward low complexity. Phosphoserine occurs at positions 296 and 299. The segment covering 310–319 (KAKDHPHNDK) has biased composition (basic and acidic residues). Residues 320–332 (SSTPGLKSNTPTP) are compositionally biased toward polar residues. WD repeat units follow at residues 483–521 (SHGE…SKSP), 529–568 (NRDN…PRIK), 573–612 (SSAP…LVRQ), 615–654 (GHTD…QLQQ), 656–695 (DFTS…KYQL), 697–736 (LHES…SIFQ), and 738–771 (KESS…EVIY).

Belongs to the WD repeat Groucho/TLE family. As to expression, at gastrulation, expression is absent within the axial mesoderm. After gastrulation is complete, expressed in the presomitic mesoderm, but expression in the tailbud doesn't begin until the six to seven somite stage, after which it becomes abundant. Expression is abundant throughout somitogenesis within the posterior half of the somites, but is absent from older somites. Also expressed in a dynamic manner within the neural plate.

It is found in the nucleus. In terms of biological role, transcriptional corepressor that binds to a number of transcription factors. Inhibits the transcriptional activation mediated by CTNNB1 and TCF family members in Wnt signaling. The effects of full-length TLE family members may be modulated by association with dominant-negative AES. This chain is Transducin-like enhancer protein 3-B, found in Danio rerio (Zebrafish).